Reading from the N-terminus, the 481-residue chain is Pyruvate kinase (481 aa).

A substrate-binding site is contributed by R33. K(+) is bound by residues N35, S37, D67, and T68. 35-38 contributes to the ATP binding site; the sequence is NFSH. Residues R74 and K155 each coordinate ATP. Residue E221 participates in Mg(2+) binding. The substrate site is built by G244, D245, and T277. D245 is a Mg(2+) binding site.

Belongs to the pyruvate kinase family. As to quaternary structure, homotetramer. Mg(2+) is required as a cofactor. It depends on K(+) as a cofactor.

It carries out the reaction pyruvate + ATP = phosphoenolpyruvate + ADP + H(+). Its pathway is carbohydrate degradation; glycolysis; pyruvate from D-glyceraldehyde 3-phosphate: step 5/5. In Chlamydia muridarum (strain MoPn / Nigg), this protein is Pyruvate kinase (pyk).